The chain runs to 380 residues: Cytochrome b (380 aa).

4 consecutive transmembrane segments (helical) span residues 34–54 (FGSL…LLAA), 78–99 (WLIR…YLHI), 114–134 (WNTG…GYVL), and 179–199 (FFTL…IHLT). His-84 and His-98 together coordinate heme b. His-183 and His-197 together coordinate heme b. His-202 is a binding site for a ubiquinone. Transmembrane regions (helical) follow at residues 227-247 (TKDI…ALFS), 289-309 (LGGV…PLLH), 321-341 (LSQL…WIGS), and 348-368 (FIII…ILFP).

It belongs to the cytochrome b family. In terms of assembly, the cytochrome bc1 complex contains 11 subunits: 3 respiratory subunits (MT-CYB, CYC1 and UQCRFS1), 2 core proteins (UQCRC1 and UQCRC2) and 6 low-molecular weight proteins (UQCRH/QCR6, UQCRB/QCR7, UQCRQ/QCR8, UQCR10/QCR9, UQCR11/QCR10 and a cleavage product of UQCRFS1). This cytochrome bc1 complex then forms a dimer. Heme b is required as a cofactor.

Its subcellular location is the mitochondrion inner membrane. Component of the ubiquinol-cytochrome c reductase complex (complex III or cytochrome b-c1 complex) that is part of the mitochondrial respiratory chain. The b-c1 complex mediates electron transfer from ubiquinol to cytochrome c. Contributes to the generation of a proton gradient across the mitochondrial membrane that is then used for ATP synthesis. This chain is Cytochrome b (MT-CYB), found in Eudyptes chrysocome (Western rockhopper penguin).